The chain runs to 184 residues: Uroplakin-2 (184 aa).

The first 25 residues, 1–25, serve as a signal peptide directing secretion; sequence MASTLPVQTLPLILILLAVLAPGTA. The propeptide occupies 26–84; sequence DFNISSLSGLLSPALTESLLIALPPCHLTGGNATLMVRRANDSKVVKSDFVVPPCRGRR. 3 N-linked (GlcNAc...) asparagine glycosylation sites follow: Asn28, Asn57, and Asn66. At 85–155 the chain is on the lumenal side; it reads ELVSVVDSGS…IGLGMARTGG (71 aa). A helical transmembrane segment spans residues 156–180; it reads MVVITVLLSVAMFLLVVGLIVALHW. Residues 181–184 are Cytoplasmic-facing; the sequence is DARK.

This sequence belongs to the uroplakin-2 family. As to quaternary structure, interacts with uroplakin-1a (UPK1A).

Its subcellular location is the cell membrane. In terms of biological role, component of the asymmetric unit membrane (AUM); a highly specialized biomembrane elaborated by terminally differentiated urothelial cells. May play an important role in regulating the assembly of the AUM. This chain is Uroplakin-2 (Upk2), found in Mus musculus (Mouse).